The sequence spans 439 residues: Adenylosuccinate synthetase (439 aa).

GTP contacts are provided by residues 25–31 (GDEGKGK) and 53–55 (GHT). Asp-26 acts as the Proton acceptor in catalysis. The Mg(2+) site is built by Asp-26 and Gly-53. IMP-binding positions include 26 to 29 (DEGK), 51 to 54 (NAGH), Thr-146, Arg-160, Asn-237, Thr-252, and Arg-316. Catalysis depends on His-54, which acts as the Proton donor. Residue 312–318 (VTTGRRR) participates in substrate binding. GTP is bound by residues Arg-318, 344–346 (KLD), and 426–428 (GVG).

Belongs to the adenylosuccinate synthetase family. As to quaternary structure, homodimer. Requires Mg(2+) as cofactor.

It localises to the cytoplasm. It catalyses the reaction IMP + L-aspartate + GTP = N(6)-(1,2-dicarboxyethyl)-AMP + GDP + phosphate + 2 H(+). It participates in purine metabolism; AMP biosynthesis via de novo pathway; AMP from IMP: step 1/2. In terms of biological role, plays an important role in the de novo pathway and in the salvage pathway of purine nucleotide biosynthesis. Catalyzes the first committed step in the biosynthesis of AMP from IMP. This chain is Adenylosuccinate synthetase, found in Mycosarcoma maydis (Corn smut fungus).